The primary structure comprises 318 residues: Taste receptor type 2 member 60 (318 aa).

Topologically, residues 1–7 (MNGDHMV) are extracellular. The chain crosses the membrane as a helical span at residues 8–28 (LGSSMTDEKAIILVIILLLLC). The Cytoplasmic portion of the chain corresponds to 29–40 (LVAIAGNCFITA). The chain crosses the membrane as a helical span at residues 41–61 (ALGMEWVLQRMLLPCDKLLVS). Over 62–88 (LGASRFCPQWVVMGKTTYVFLYPTAFP) the chain is Extracellular. Residues 89-109 (YNPVLRFLAFQWDLLNAATLW) form a helical membrane-spanning segment. The Cytoplasmic portion of the chain corresponds to 110-128 (FSTWLSVFYCVKIATFTHP). A helical membrane pass occupies residues 129 to 149 (VFLWLKHKLSEWVPWMLFSSV). Residues 150 to 183 (GLSSFTTILFFIGNHRVYQSYLRNHLQPWNVTGN) are Extracellular-facing. Residue Asn-179 is glycosylated (N-linked (GlcNAc...) asparagine). The chain crosses the membrane as a helical span at residues 184–204 (SIWSYCEKFYLFPLKMITWTM). Residues 205–234 (PTAVFFICMILLITSLGRHMKKALLTNSGF) are Cytoplasmic-facing. A helical transmembrane segment spans residues 235-255 (RDPSVQAHIKAMLALLSFAML). At 256-264 (FISYFLSLV) the chain is on the extracellular side. A helical transmembrane segment spans residues 265–285 (FSAAGIFPPLDFKFWVWESVI). Over 286–318 (YLCAAVHPIILLFSNRRLRAVLKRCRSSRCGTP) the chain is Cytoplasmic.

It belongs to the G-protein coupled receptor T2R family.

The protein resides in the membrane. Its function is as follows. Receptor that may play a role in the perception of bitterness and is gustducin-linked. May play a role in sensing the chemical composition of the gastrointestinal content. The activity of this receptor may stimulate alpha gustducin, mediate PLC-beta-2 activation and lead to the gating of TRPM5. This is Taste receptor type 2 member 60 (TAS2R60) from Pongo pygmaeus (Bornean orangutan).